Reading from the N-terminus, the 937-residue chain is Vacuolar membrane protease (937 aa).

The Cytoplasmic portion of the chain corresponds to 1–16; the sequence is PNGFVKFIRSIFGYRK. A helical transmembrane segment spans residues 17–37; that stretch reads TSLTLFVILTYVAVLLLAYLD. At 38-373 the chain is on the vacuolar side; that stretch reads HSLYYSVDLP…FPTSQVVVAS (336 aa). Residues asparagine 106 and asparagine 140 are each glycosylated (N-linked (GlcNAc...) asparagine). Zn(2+) contacts are provided by histidine 154 and aspartate 166. Glutamate 201 functions as the Proton acceptor in the catalytic mechanism. Zn(2+) contacts are provided by glutamate 202, glutamate 227, and histidine 300. A helical membrane pass occupies residues 374-394; the sequence is ILLLVLIPGISIPFLIIIFGY. Residues 395–407 are Cytoplasmic-facing; that stretch reads KKNWELSFVNVTK. A helical membrane pass occupies residues 408 to 428; sequence FPISLAISAALLNLFTNGFIV. The Vacuolar segment spans residues 429–437; sequence PFNQFLPNS. A helical membrane pass occupies residues 438 to 458; it reads SPFALVAILFATFLLLNYLIL. The Cytoplasmic segment spans residues 459-475; the sequence is NGINLIFVSYKIVNHDE. A helical transmembrane segment spans residues 476–496; the sequence is KLISIIETSFLYWVVLIYSTA. At 497 to 510 the chain is on the vacuolar side; it reads KLANNVIGDDHSGE. Residues 511 to 531 traverse the membrane as a helical segment; the sequence is FPIIFLCALQAVASIFGLIGW. The Cytoplasmic segment spans residues 532 to 580; sequence SFKPVPKEHYVVVPQEEAEPLLGSSDNFNYGSPDVEDDRLVSDGSYDWS. Residues 581–601 traverse the membrane as a helical segment; it reads IQFLTIVPISTYLIYNSGFLV. At 602 to 618 the chain is on the vacuolar side; the sequence is VDGINKSIQESLISQNL. The N-linked (GlcNAc...) asparagine glycan is linked to asparagine 606. Residues 619–639 traverse the membrane as a helical segment; sequence IYKLLQTFAISLSIPLLPFIF. The Cytoplasmic segment spans residues 640 to 643; it reads KVNR. The helical transmembrane segment at 644 to 664 threads the bilayer; sequence LFVLALFLISTIGVLFVATAD. Residues 665–937 lie on the Vacuolar side of the membrane; that stretch reads SFNVANPLKL…LVSVSKTVEL (273 aa). N-linked (GlcNAc...) asparagine glycans are attached at residues asparagine 758, asparagine 870, and asparagine 887.

The protein belongs to the peptidase M28 family. Requires Zn(2+) as cofactor.

It localises to the vacuole membrane. Functionally, may be involved in vacuolar sorting and osmoregulation. This chain is Vacuolar membrane protease, found in Scheffersomyces stipitis (strain ATCC 58785 / CBS 6054 / NBRC 10063 / NRRL Y-11545) (Yeast).